The following is a 48-amino-acid chain: Protein YodE (48 aa).

The sequence is that of Protein YodE from Escherichia coli (strain K12).